Reading from the N-terminus, the 385-residue chain is Pepsin A (385 aa).

Positions 1–15 (MKWLLLLSLVVLSEC) are cleaved as a signal peptide. The propeptide at 16–59 (LVKVPLVRKKSLRQNLIKNGKLKDFLKTHKHNPASKYFPEAAAL) is activation peptide. One can recognise a Peptidase A1 domain in the interval 73-382 (YFGTIGIGTP…DRANNKVGLA (310 aa)). Residue Asp91 is part of the active site. Cys104 and Cys109 are joined by a disulfide. The residue at position 127 (Ser127) is a Phosphoserine. Cys265 and Cys269 are oxidised to a cystine. The active site involves Asp274. A disulfide bridge links Cys308 with Cys341.

The protein belongs to the peptidase A1 family. Post-translationally, minor amounts of the active enzyme occur with 'Ala-58' at the amino end.

Its subcellular location is the secreted. It catalyses the reaction Preferential cleavage: hydrophobic, preferably aromatic, residues in P1 and P1' positions. Cleaves 1-Phe-|-Val-2, 4-Gln-|-His-5, 13-Glu-|-Ala-14, 14-Ala-|-Leu-15, 15-Leu-|-Tyr-16, 16-Tyr-|-Leu-17, 23-Gly-|-Phe-24, 24-Phe-|-Phe-25 and 25-Phe-|-Tyr-26 bonds in the B chain of insulin.. In terms of biological role, shows particularly broad specificity; although bonds involving phenylalanine and leucine are preferred, many others are also cleaved to some extent. The chain is Pepsin A (PGA) from Sus scrofa (Pig).